Here is a 519-residue protein sequence, read N- to C-terminus: GMP synthase [glutamine-hydrolyzing] (519 aa).

The region spanning 4 to 201 is the Glutamine amidotransferase type-1 domain; sequence AILILDFGSQ…VHDICDAGYD (198 aa). Cys-81 functions as the Nucleophile in the catalytic mechanism. Residues His-175 and Glu-177 contribute to the active site. The region spanning 202–394 is the GMPS ATP-PPase domain; sequence WNMPDYVEEA…LGLPRDLVFR (193 aa). Residue 229 to 235 participates in ATP binding; sequence SGGVDSS.

As to quaternary structure, homodimer.

The catalysed reaction is XMP + L-glutamine + ATP + H2O = GMP + L-glutamate + AMP + diphosphate + 2 H(+). It functions in the pathway purine metabolism; GMP biosynthesis; GMP from XMP (L-Gln route): step 1/1. Its function is as follows. Catalyzes the synthesis of GMP from XMP. This Nitrosomonas eutropha (strain DSM 101675 / C91 / Nm57) protein is GMP synthase [glutamine-hydrolyzing].